The chain runs to 350 residues: Glycerol-3-phosphate dehydrogenase [NAD(+)], cytoplasmic (350 aa).

NAD(+) is bound by residues 11–16 (GSGNWG), Phe-98, Lys-121, and Ala-155. Position 121 (Lys-121) interacts with substrate. Lys-206 (proton acceptor) is an active-site residue. Positions 270 and 299 each coordinate NAD(+). 270–271 (RN) serves as a coordination point for substrate.

The protein belongs to the NAD-dependent glycerol-3-phosphate dehydrogenase family. In terms of assembly, homodimer.

The protein localises to the cytoplasm. The catalysed reaction is sn-glycerol 3-phosphate + NAD(+) = dihydroxyacetone phosphate + NADH + H(+). It functions in the pathway phospholipid metabolism; alpha-glycerophosphate cycle. In Drosophila ezoana (Fruit fly), this protein is Glycerol-3-phosphate dehydrogenase [NAD(+)], cytoplasmic (Gpdh1).